Consider the following 713-residue polypeptide: Nucleoporin NUP82 (713 aa).

An interaction with NUP116 region spans residues 1 to 409; it reads MSQSSRLSAL…SDLNPLAGLK (409 aa). Positions 463–713 are interaction with NSP1 and NUP159; that stretch reads TSISTEKSDT…VSQEFTTKTQ (251 aa). The stretch at 582–713 forms a coiled coil; the sequence is EAQNKKWDAQ…VSQEFTTKTQ (132 aa). The short motif at 607–623 is the Bipartite nuclear localization signal element; it reads KKLSQIAESNKFKEKKI.

Component of the nuclear pore complex (NPC). NPC constitutes the exclusive means of nucleocytoplasmic transport. NPCs allow the passive diffusion of ions and small molecules and the active, nuclear transport receptor-mediated bidirectional transport of macromolecules such as proteins, RNAs, ribonucleoparticles (RNPs), and ribosomal subunits across the nuclear envelope. Due to its 8-fold rotational symmetry, all subunits are present with 8 copies or multiples thereof. NUP82 is part of the NUP82 subcomplex. This subcomplex is the base for interactions with NUP116 and GLE2, with NUP42 and GLE1 and with DYN2.

The protein resides in the nucleus. The protein localises to the nuclear pore complex. Its subcellular location is the nucleus membrane. In terms of biological role, functions as a component of the nuclear pore complex (NPC). NPC components, collectively referred to as nucleoporins (NUPs), can play the role of both NPC structural components and of docking or interaction partners for transiently associated nuclear transport factors. It is specifically involved as part of the NUP82-NUP159-NSP1 subcomplex in nuclear mRNA and pre-ribosome export by acting as a linker tethering nucleoporins that are directly involved in nuclear transport to the NPC via its coiled-coil domain. The polypeptide is Nucleoporin NUP82 (NUP82) (Saccharomyces cerevisiae (strain ATCC 204508 / S288c) (Baker's yeast)).